The primary structure comprises 313 residues: tRNA dimethylallyltransferase (313 aa).

11 to 18 (GPTAAGKS) is an ATP binding site. 13–18 (TAAGKS) lines the substrate pocket. 3 interaction with substrate tRNA regions span residues 36-39 (DSAT), 160-164 (QRIQR), and 244-249 (RCVGYR).

It belongs to the IPP transferase family. As to quaternary structure, monomer. The cofactor is Mg(2+).

It carries out the reaction adenosine(37) in tRNA + dimethylallyl diphosphate = N(6)-dimethylallyladenosine(37) in tRNA + diphosphate. Catalyzes the transfer of a dimethylallyl group onto the adenine at position 37 in tRNAs that read codons beginning with uridine, leading to the formation of N6-(dimethylallyl)adenosine (i(6)A). This is tRNA dimethylallyltransferase from Bordetella pertussis (strain Tohama I / ATCC BAA-589 / NCTC 13251).